A 227-amino-acid polypeptide reads, in one-letter code: Cytochrome c oxidase subunit 2 (227 aa).

Topologically, residues 1–14 (MAYPFQLGFQDATS) are mitochondrial intermembrane. The chain crosses the membrane as a helical span at residues 15-45 (PIMEELLHFHDHTLMIVFLISSLVLYIISLM). Residues 46 to 59 (LTTKLTHTSTMDAQ) lie on the Mitochondrial matrix side of the membrane. A helical transmembrane segment spans residues 60–87 (EVETIWTILPAIILILIALPSLRILYMM). Topologically, residues 88–227 (DEINNPSLTV…YFEKWSASML (140 aa)) are mitochondrial intermembrane. Residues H161, C196, E198, C200, H204, and M207 each contribute to the Cu cation site. E198 serves as a coordination point for Mg(2+). Y218 carries the phosphotyrosine modification.

The protein belongs to the cytochrome c oxidase subunit 2 family. As to quaternary structure, component of the cytochrome c oxidase (complex IV, CIV), a multisubunit enzyme composed of 14 subunits. The complex is composed of a catalytic core of 3 subunits MT-CO1, MT-CO2 and MT-CO3, encoded in the mitochondrial DNA, and 11 supernumerary subunits COX4I, COX5A, COX5B, COX6A, COX6B, COX6C, COX7A, COX7B, COX7C, COX8 and NDUFA4, which are encoded in the nuclear genome. The complex exists as a monomer or a dimer and forms supercomplexes (SCs) in the inner mitochondrial membrane with NADH-ubiquinone oxidoreductase (complex I, CI) and ubiquinol-cytochrome c oxidoreductase (cytochrome b-c1 complex, complex III, CIII), resulting in different assemblies (supercomplex SCI(1)III(2)IV(1) and megacomplex MCI(2)III(2)IV(2)). Found in a complex with TMEM177, COA6, COX18, COX20, SCO1 and SCO2. Interacts with TMEM177 in a COX20-dependent manner. Interacts with COX20. Interacts with COX16. Cu cation serves as cofactor.

It is found in the mitochondrion inner membrane. It carries out the reaction 4 Fe(II)-[cytochrome c] + O2 + 8 H(+)(in) = 4 Fe(III)-[cytochrome c] + 2 H2O + 4 H(+)(out). Functionally, component of the cytochrome c oxidase, the last enzyme in the mitochondrial electron transport chain which drives oxidative phosphorylation. The respiratory chain contains 3 multisubunit complexes succinate dehydrogenase (complex II, CII), ubiquinol-cytochrome c oxidoreductase (cytochrome b-c1 complex, complex III, CIII) and cytochrome c oxidase (complex IV, CIV), that cooperate to transfer electrons derived from NADH and succinate to molecular oxygen, creating an electrochemical gradient over the inner membrane that drives transmembrane transport and the ATP synthase. Cytochrome c oxidase is the component of the respiratory chain that catalyzes the reduction of oxygen to water. Electrons originating from reduced cytochrome c in the intermembrane space (IMS) are transferred via the dinuclear copper A center (CU(A)) of subunit 2 and heme A of subunit 1 to the active site in subunit 1, a binuclear center (BNC) formed by heme A3 and copper B (CU(B)). The BNC reduces molecular oxygen to 2 water molecules using 4 electrons from cytochrome c in the IMS and 4 protons from the mitochondrial matrix. The protein is Cytochrome c oxidase subunit 2 (MT-CO2) of Felis catus (Cat).